Here is a 263-residue protein sequence, read N- to C-terminus: Outer membrane lipoprotein 3 (263 aa).

An N-terminal signal peptide occupies residues 1-19; it reads MKIMKLAGAVAIFSLFLTA. Residue Cys-20 is the site of N-palmitoyl cysteine attachment. The S-diacylglycerol cysteine moiety is linked to residue Cys-20.

This sequence belongs to the NlpA lipoprotein family.

The protein localises to the cell outer membrane. The protein is Outer membrane lipoprotein 3 (plpC) of Mannheimia haemolytica (Pasteurella haemolytica).